The sequence spans 478 residues: Glycogen synthase (478 aa).

Lys-15 is a binding site for ADP-alpha-D-glucose.

It belongs to the glycosyltransferase 1 family. Bacterial/plant glycogen synthase subfamily.

The enzyme catalyses [(1-&gt;4)-alpha-D-glucosyl](n) + ADP-alpha-D-glucose = [(1-&gt;4)-alpha-D-glucosyl](n+1) + ADP + H(+). The protein operates within glycan biosynthesis; glycogen biosynthesis. Its function is as follows. Synthesizes alpha-1,4-glucan chains using ADP-glucose. The sequence is that of Glycogen synthase from Lactococcus lactis subsp. lactis (strain IL1403) (Streptococcus lactis).